A 332-amino-acid chain; its full sequence is Aerobic cobaltochelatase subunit CobS (332 aa).

In terms of assembly, heterotrimer of CobN, CobS and CobT.

Its subcellular location is the cytoplasm. The catalysed reaction is hydrogenobyrinate a,c-diamide + Co(2+) + ATP + H2O = cob(II)yrinate a,c diamide + ADP + phosphate + 5 H(+). It functions in the pathway cofactor biosynthesis; adenosylcobalamin biosynthesis; cob(II)yrinate a,c-diamide from precorrin-2 (aerobic route): step 10/10. Its function is as follows. Catalyzes cobalt insertion in the corrin ring. The chain is Aerobic cobaltochelatase subunit CobS (cobS) from Sinorhizobium sp.